Reading from the N-terminus, the 341-residue chain is 4-hydroxy-2-oxovalerate aldolase 3 (341 aa).

Positions 5-257 (ITLHDMTLRD…ETGVDVYRIA (253 aa)) constitute a Pyruvate carboxyltransferase domain. 13-14 (RD) lines the substrate pocket. Aspartate 14 contributes to the Mn(2+) binding site. The active-site Proton acceptor is the histidine 17. Residues serine 167 and histidine 196 each coordinate substrate. Residues histidine 196 and histidine 198 each contribute to the Mn(2+) site. Tyrosine 287 provides a ligand contact to substrate.

It belongs to the 4-hydroxy-2-oxovalerate aldolase family.

It carries out the reaction (S)-4-hydroxy-2-oxopentanoate = acetaldehyde + pyruvate. This chain is 4-hydroxy-2-oxovalerate aldolase 3 (bpHI), found in Cupriavidus necator (strain ATCC 17699 / DSM 428 / KCTC 22496 / NCIMB 10442 / H16 / Stanier 337) (Ralstonia eutropha).